A 509-amino-acid chain; its full sequence is Bifunctional purine biosynthesis protein PurH (509 aa).

The MGS-like domain maps to 1–145 (MIKRALISVF…KSFKDVVVIS (145 aa)).

Belongs to the PurH family.

It carries out the reaction (6R)-10-formyltetrahydrofolate + 5-amino-1-(5-phospho-beta-D-ribosyl)imidazole-4-carboxamide = 5-formamido-1-(5-phospho-D-ribosyl)imidazole-4-carboxamide + (6S)-5,6,7,8-tetrahydrofolate. The catalysed reaction is IMP + H2O = 5-formamido-1-(5-phospho-D-ribosyl)imidazole-4-carboxamide. It participates in purine metabolism; IMP biosynthesis via de novo pathway; 5-formamido-1-(5-phospho-D-ribosyl)imidazole-4-carboxamide from 5-amino-1-(5-phospho-D-ribosyl)imidazole-4-carboxamide (10-formyl THF route): step 1/1. Its pathway is purine metabolism; IMP biosynthesis via de novo pathway; IMP from 5-formamido-1-(5-phospho-D-ribosyl)imidazole-4-carboxamide: step 1/1. The sequence is that of Bifunctional purine biosynthesis protein PurH from Brachyspira hyodysenteriae (strain ATCC 49526 / WA1).